The chain runs to 86 residues: Small ribosomal subunit protein uS17 (86 aa).

This sequence belongs to the universal ribosomal protein uS17 family. As to quaternary structure, part of the 30S ribosomal subunit.

One of the primary rRNA binding proteins, it binds specifically to the 5'-end of 16S ribosomal RNA. The chain is Small ribosomal subunit protein uS17 from Dehalococcoides mccartyi (strain ATCC BAA-2266 / KCTC 15142 / 195) (Dehalococcoides ethenogenes (strain 195)).